Reading from the N-terminus, the 3712-residue chain is Laminin subunit alpha (3712 aa).

The N-terminal stretch at 1–22 is a signal peptide; the sequence is MGHGVASIGALLVILAISYCQA. The 250-residue stretch at 23–272 folds into the Laminin N-terminal domain; it reads ELTPPYFNLA…SIKDISIGGR (250 aa). Residues asparagine 116 and asparagine 219 are each glycosylated (N-linked (GlcNAc...) asparagine). Intrachain disulfides connect cysteine 273–cysteine 282, cysteine 275–cysteine 296, cysteine 298–cysteine 307, cysteine 310–cysteine 330, cysteine 333–cysteine 342, cysteine 335–cysteine 367, cysteine 370–cysteine 379, cysteine 382–cysteine 400, cysteine 403–cysteine 414, cysteine 405–cysteine 421, cysteine 423–cysteine 432, cysteine 435–cysteine 445, cysteine 448–cysteine 460, cysteine 450–cysteine 468, cysteine 470–cysteine 479, cysteine 482–cysteine 492, cysteine 495–cysteine 507, cysteine 497–cysteine 514, cysteine 516–cysteine 525, cysteine 528–cysteine 538, cysteine 541–cysteine 553, cysteine 543–cysteine 560, cysteine 562–cysteine 571, cysteine 574–cysteine 584, cysteine 587–cysteine 599, cysteine 589–cysteine 605, cysteine 607–cysteine 616, cysteine 619–cysteine 629, cysteine 632–cysteine 644, cysteine 634–cysteine 650, cysteine 652–cysteine 661, cysteine 664–cysteine 674, cysteine 677–cysteine 691, cysteine 679–cysteine 700, cysteine 702–cysteine 711, cysteine 714–cysteine 729, cysteine 732–cysteine 746, cysteine 734–cysteine 753, cysteine 755–cysteine 764, cysteine 767–cysteine 782, cysteine 785–cysteine 797, cysteine 787–cysteine 804, and cysteine 806–cysteine 815. 10 consecutive Laminin EGF-like domains span residues 273-332, 333-402, 403-447, 448-494, 495-540, 541-586, 587-631, 632-676, 677-731, and 732-784; these read CMCN…NCEP, CNCH…VCSP, CQCD…NCRE, CECN…ECKA, CECN…TCSY, CDCD…DCKP, CNCS…DCLP, CHCD…SCED, CNCD…GCEI, and CDCW…GCKD. The N-linked (GlcNAc...) asparagine glycan is linked to asparagine 395. Residue asparagine 453 is glycosylated (N-linked (GlcNAc...) asparagine). Asparagine 508 carries an N-linked (GlcNAc...) asparagine glycan. Asparagine 588 carries N-linked (GlcNAc...) asparagine glycosylation. A glycan (N-linked (GlcNAc...) asparagine) is linked at asparagine 722. The Laminin EGF-like 11; truncated domain maps to 785-815; the sequence is CSCDVGGSWQSVCDKISGQCKCHPRITGLAC. Positions 816–1374 are domain IV''; that stretch reads TQPLTTHFFP…TADYNSGALP (559 aa). Asparagine 897 and asparagine 1352 each carry an N-linked (GlcNAc...) asparagine glycan. Cystine bridges form between cysteine 1375–cysteine 1387, cysteine 1377–cysteine 1394, cysteine 1396–cysteine 1405, cysteine 1408–cysteine 1418, cysteine 1421–cysteine 1429, cysteine 1423–cysteine 1436, cysteine 1438–cysteine 1447, cysteine 1450–cysteine 1463, cysteine 1466–cysteine 1480, cysteine 1468–cysteine 1487, cysteine 1489–cysteine 1498, cysteine 1501–cysteine 1511, cysteine 1514–cysteine 1526, cysteine 1516–cysteine 1533, cysteine 1535–cysteine 1544, and cysteine 1547–cysteine 1562. 4 consecutive Laminin EGF-like domains span residues 1375–1420, 1421–1465, 1466–1513, and 1514–1564; these read CNCD…DCKP, CKCP…GCEE, CACN…HCEQ, and CSCH…GCTT. Asparagine 1484 carries an N-linked (GlcNAc...) asparagine glycan. One can recognise a Laminin EGF-like 16; first part domain in the interval 1565–1574; the sequence is CFCFGKTSRC. N-linked (GlcNAc...) asparagine glycans are attached at residues asparagine 1583 and asparagine 1617. The Laminin IV type A domain occupies 1585–1775; the sequence is SLLKHVSITT…GEYQFLAVER (191 aa). A Laminin EGF-like 16; second part domain is found at 1776–1808; that stretch reads CSCPPGYSGHSCEDCAPGYYRDPSGPYGGYCIP. Cystine bridges form between cysteine 1778–cysteine 1787, cysteine 1790–cysteine 1806, cysteine 1809–cysteine 1818, cysteine 1811–cysteine 1825, cysteine 1828–cysteine 1837, cysteine 1840–cysteine 1856, cysteine 1859–cysteine 1874, cysteine 1861–cysteine 1885, cysteine 1887–cysteine 1896, cysteine 1899–cysteine 1914, cysteine 1917–cysteine 1931, cysteine 1919–cysteine 1938, cysteine 1941–cysteine 1950, cysteine 1953–cysteine 1967, cysteine 1970–cysteine 1980, cysteine 1972–cysteine 1987, cysteine 1989–cysteine 1998, cysteine 2001–cysteine 2014, cysteine 2017–cysteine 2028, cysteine 2019–cysteine 2035, cysteine 2037–cysteine 2046, cysteine 2049–cysteine 2061, cysteine 2064–cysteine 2076, cysteine 2066–cysteine 2083, cysteine 2085–cysteine 2094, and cysteine 2097–cysteine 2109. 6 consecutive Laminin EGF-like domains span residues 1809–1858, 1859–1916, 1917–1969, 1970–2016, 2017–2063, and 2064–2111; these read CECN…DCMI, CACP…VCKP, CECS…NCQS, CDCD…GCRA, CDCG…GCTP, and CNCN…GCQE. Asparagine 1847 carries N-linked (GlcNAc...) asparagine glycosylation. An N-linked (GlcNAc...) asparagine glycan is attached at asparagine 1943. Asparagine 2024 carries an N-linked (GlcNAc...) asparagine glycan. The domain II and I stretch occupies residues 2112-2671; that stretch reads CNNCHHALLD…EAARQLANSI (560 aa). Positions 2178-2249 form a coiled coil; it reads KKANSELESD…LSKNLEAAAS (72 aa). N-linked (GlcNAc...) asparagine glycosylation is found at asparagine 2196, asparagine 2215, asparagine 2267, asparagine 2301, and asparagine 2323. The stretch at 2301–2321 forms a coiled coil; it reads NKSLNALKNDIGEFSDHLEDL. Residues 2376–2450 are a coiled coil; that stretch reads DLTLNQINQK…QYTDMTASAE (75 aa). 9 N-linked (GlcNAc...) asparagine glycosylation sites follow: asparagine 2482, asparagine 2524, asparagine 2538, asparagine 2569, asparagine 2699, asparagine 2720, asparagine 2890, asparagine 2938, and asparagine 3010. Positions 2541–2676 form a coiled coil; sequence EHQLKDINKL…LANSIKVGVN (136 aa). Laminin G-like domains follow at residues 2672–2868, 2876–3048, and 3055–3223; these read KVGV…ERDV, VTGL…EEGC, and VVSY…INGC. A disulfide bond links cysteine 3022 and cysteine 3048. Asparagine 3070 is a glycosylation site (N-linked (GlcNAc...) asparagine). Cysteine 3196 and cysteine 3223 are joined by a disulfide. The tract at residues 3244–3297 is disordered; sequence NEVESPWSNADTLPPLKPDIESTLPPTTPTTTTTTTTTTTSTTTTSTTTTTTTP. Over residues 3265 to 3297 the composition is skewed to low complexity; that stretch reads STLPPTTPTTTTTTTTTTTSTTTTSTTTTTTTP. Laminin G-like domains follow at residues 3349–3528 and 3534–3709; these read GYRF…VVPC and RGLF…QGYC. Asparagine 3491 carries N-linked (GlcNAc...) asparagine glycosylation. Cysteine 3505 and cysteine 3528 are disulfide-bonded. An N-linked (GlcNAc...) asparagine glycan is attached at asparagine 3612. An intrachain disulfide couples cysteine 3682 to cysteine 3709.

In terms of assembly, laminin is a complex glycoprotein, consisting of three different polypeptide chains (alpha, beta, gamma), which are bound to each other by disulfide bonds into a cross-shaped molecule comprising one long and three short arms with globules at each end. As to expression, newly formed mesoderm and later prominently expressed in hemocytes, which also synthesize collagen IV. Expressed in muscles.

It is found in the secreted. It localises to the extracellular space. The protein resides in the extracellular matrix. Its subcellular location is the basement membrane. The protein localises to the synapse. It is found in the cell projection. It localises to the axon. The protein resides in the cytoplasmic vesicle. Its subcellular location is the secretory vesicle. The protein localises to the synaptic vesicle. Functionally, binding to cells via a high affinity receptor, laminin is thought to mediate the attachment, migration and organization of cells into tissues during embryonic development by interacting with other extracellular matrix components. Activates presynaptic signaling involving integrin alpha-PS3/beta-nu and Fak to suppress neuromuscular junction (NMJ) growth during larval development and during low crawling activity, but not during higher-crawling conditions. Mediates, together with integrin alpha-PS3/beta-nu, glutamate receptor-modulated NMJ growth. The sequence is that of Laminin subunit alpha (LanA) from Drosophila melanogaster (Fruit fly).